The sequence spans 823 residues: Leucine--tRNA ligase (823 aa).

Residues 55 to 65 (PYPSGNLHIGH) carry the 'HIGH' region motif. The 'KMSKS' region signature appears at 590 to 594 (KMSKS). Residue lysine 593 participates in ATP binding.

It belongs to the class-I aminoacyl-tRNA synthetase family.

It localises to the cytoplasm. It carries out the reaction tRNA(Leu) + L-leucine + ATP = L-leucyl-tRNA(Leu) + AMP + diphosphate. This chain is Leucine--tRNA ligase, found in Deinococcus radiodurans (strain ATCC 13939 / DSM 20539 / JCM 16871 / CCUG 27074 / LMG 4051 / NBRC 15346 / NCIMB 9279 / VKM B-1422 / R1).